The following is a 447-amino-acid chain: Cobyrinate a,c-diamide synthase (447 aa).

The 188-residue stretch at Lys252–Tyr439 folds into the GATase cobBQ-type domain. The active-site Nucleophile is Cys331.

It belongs to the CobB/CbiA family. Mg(2+) serves as cofactor.

It catalyses the reaction cob(II)yrinate + 2 L-glutamine + 2 ATP + 2 H2O = cob(II)yrinate a,c diamide + 2 L-glutamate + 2 ADP + 2 phosphate + 2 H(+). The catalysed reaction is Ni-sirohydrochlorin + 2 L-glutamine + 2 ATP + 2 H2O = Ni-sirohydrochlorin a,c-diamide + 2 L-glutamate + 2 ADP + 2 phosphate + 2 H(+). It participates in cofactor biosynthesis; adenosylcobalamin biosynthesis; cob(II)yrinate a,c-diamide from sirohydrochlorin (anaerobic route): step 10/10. Catalyzes the ATP-dependent amidation of the two carboxylate groups at positions a and c of cobyrinate, using either L-glutamine or ammonia as the nitrogen source. Involved in the biosynthesis of the unique nickel-containing tetrapyrrole coenzyme F430, the prosthetic group of methyl-coenzyme M reductase (MCR), which plays a key role in methanogenesis and anaerobic methane oxidation. Catalyzes the ATP-dependent amidation of the two carboxylate groups at positions a and c of Ni-sirohydrochlorin, using L-glutamine or ammonia as the nitrogen source. This Methanococcus maripaludis (strain C7 / ATCC BAA-1331) protein is Cobyrinate a,c-diamide synthase.